The sequence spans 1953 residues: Putative surface-exposed virulence protein BigA (1953 aa).

Positions 1-27 are cleaved as a signal peptide; sequence MNPMQKKKLISIAIALTLQSYYIPAIA. 3 disordered regions span residues 31–50, 88–258, and 1496–1517; these read NDDE…EKRA, GGGD…TFSN, and TTAP…PQQL. A 1; truncated repeat occupies 101-103; the sequence is PDN. The interval 101–252 is 15 X 11 AA tandem repeats; the sequence is PDNGGDVTPP…DDDDTPPDDS (152 aa). One copy of the 2; truncated repeat lies at 104-113; the sequence is GGDVTPPDDG. The stretch at 114 to 122 is one 3; truncated repeat; it reads GNVTPPDDG. 11 tandem repeats follow at residues 123-133, 134-144, 145-155, 156-166, 167-177, 178-188, 189-199, 200-210, 211-221, 222-232, and 233-243. Acidic residues-rich tracts occupy residues 141–177 and 185–249; these read DSGD…DSGD and DSGD…DTPP. One copy of the 15; truncated repeat lies at 244–252; the sequence is DDDTPPDDS. One can recognise an Autotransporter domain in the interval 1649–1952; that stretch reads SGAQATTVFR…GFMLNVKKTF (304 aa).

This is Putative surface-exposed virulence protein BigA (bigA) from Salmonella typhimurium (strain LT2 / SGSC1412 / ATCC 700720).